A 619-amino-acid chain; its full sequence is Chaperone protein HscA homolog (619 aa).

This sequence belongs to the heat shock protein 70 family.

In terms of biological role, chaperone involved in the maturation of iron-sulfur cluster-containing proteins. Has a low intrinsic ATPase activity which is markedly stimulated by HscB. The chain is Chaperone protein HscA homolog from Acinetobacter baumannii (strain ACICU).